An 81-amino-acid chain; its full sequence is MSHSVKVYDTCIGCTQCVRACPCDVLEMVAWDGCKAGQIASAPRTEDCIGCKRCETACPTDFLSVRVYLGGETTRSMGLAY.

4Fe-4S ferredoxin-type domains follow at residues 2–31 and 39–68; these read SHSV…MVAW and IASA…VRVY. [4Fe-4S] cluster is bound by residues cysteine 11, cysteine 14, cysteine 17, cysteine 21, cysteine 48, cysteine 51, cysteine 54, and cysteine 58.

In terms of assembly, the eukaryotic PSI reaction center is composed of at least 11 subunits. Requires [4Fe-4S] cluster as cofactor.

Its subcellular location is the plastid. The protein localises to the chloroplast thylakoid membrane. The enzyme catalyses reduced [plastocyanin] + hnu + oxidized [2Fe-2S]-[ferredoxin] = oxidized [plastocyanin] + reduced [2Fe-2S]-[ferredoxin]. Functionally, apoprotein for the two 4Fe-4S centers FA and FB of photosystem I (PSI); essential for photochemical activity. FB is the terminal electron acceptor of PSI, donating electrons to ferredoxin. The C-terminus interacts with PsaA/B/D and helps assemble the protein into the PSI complex. Required for binding of PsaD and PsaE to PSI. PSI is a plastocyanin/cytochrome c6-ferredoxin oxidoreductase, converting photonic excitation into a charge separation, which transfers an electron from the donor P700 chlorophyll pair to the spectroscopically characterized acceptors A0, A1, FX, FA and FB in turn. The polypeptide is Photosystem I iron-sulfur center (Guillardia theta (Cryptophyte)).